The following is a 414-amino-acid chain: Glutamyl-tRNA reductase (414 aa).

Substrate-binding positions include 49-52, Ser108, 113-115, and Gln119; these read TCNR and EPQ. Cys50 acts as the Nucleophile in catalysis. 188 to 193 is a binding site for NADP(+); it reads GAGQTG.

This sequence belongs to the glutamyl-tRNA reductase family. As to quaternary structure, homodimer.

The catalysed reaction is (S)-4-amino-5-oxopentanoate + tRNA(Glu) + NADP(+) = L-glutamyl-tRNA(Glu) + NADPH + H(+). Its pathway is porphyrin-containing compound metabolism; protoporphyrin-IX biosynthesis; 5-aminolevulinate from L-glutamyl-tRNA(Glu): step 1/2. In terms of biological role, catalyzes the NADPH-dependent reduction of glutamyl-tRNA(Glu) to glutamate 1-semialdehyde (GSA). This Francisella tularensis subsp. tularensis (strain WY96-3418) protein is Glutamyl-tRNA reductase.